The chain runs to 714 residues: Protein HAPLESS 2-B (714 aa).

Residues 1–33 (MAPRRRRRAARSSRPLLLALLAAAVNNFAPAGG) form the signal peptide. Residues 34 to 552 (VEVLAKSRLE…FFTGTTCSTR (519 aa)) are Extracellular-facing. Cystine bridges form between cysteine 45–cysteine 59, cysteine 134–cysteine 164, cysteine 146–cysteine 194, cysteine 165–cysteine 321, cysteine 167–cysteine 177, cysteine 304–cysteine 328, and cysteine 441–cysteine 479. Residues 553–573 (CWSFLKFVIHGLLLVAVLWLL) form a helical membrane-spanning segment. The Cytoplasmic segment spans residues 574–714 (HRKGLFDPLY…HGDRRHHAWH (141 aa)). The tract at residues 597 to 619 (RARRRHKRAHSHRHSHHHDAHKR) is disordered. Basic residues predominate over residues 598–619 (ARRRHKRAHSHRHSHHHDAHKR).

The protein belongs to the HAP2/GCS1 family.

Its subcellular location is the endoplasmic reticulum membrane. The protein localises to the cell membrane. Its function is as follows. Required for male fertility. Plays a role in pollen tube guidance and successful gamete attachment. Essential for the fusion of gametes during double fertilization, where one male gamete fuses with the egg to produce a zygote, and another male gamete fuses with the central cell to produce the endosperm. Mediates the fusion of cell membranes. Not required for pollen tube outgrowth. The protein is Protein HAPLESS 2-B (HAP2B) of Oryza sativa subsp. japonica (Rice).